The chain runs to 62 residues: Large ribosomal subunit protein uL30 (62 aa).

Belongs to the universal ribosomal protein uL30 family. In terms of assembly, part of the 50S ribosomal subunit.

This Kosmotoga olearia (strain ATCC BAA-1733 / DSM 21960 / TBF 19.5.1) protein is Large ribosomal subunit protein uL30.